The primary structure comprises 449 residues: Tubulin beta chain (449 aa).

8 residues coordinate GTP: Gln11, Glu69, Ser138, Gly142, Thr143, Gly144, Asn204, and Asn226. Residue Glu69 participates in Mg(2+) binding. Residues 426-449 form a disordered region; the sequence is QDATAEEEGEFDEEEGEMGAEEGA. Positions 429–449 are enriched in acidic residues; it reads TAEEEGEFDEEEGEMGAEEGA.

The protein belongs to the tubulin family. Dimer of alpha and beta chains. A typical microtubule is a hollow water-filled tube with an outer diameter of 25 nm and an inner diameter of 15 nM. Alpha-beta heterodimers associate head-to-tail to form protofilaments running lengthwise along the microtubule wall with the beta-tubulin subunit facing the microtubule plus end conferring a structural polarity. Microtubules usually have 13 protofilaments but different protofilament numbers can be found in some organisms and specialized cells. Requires Mg(2+) as cofactor.

It is found in the cytoplasm. Its subcellular location is the cytoskeleton. In terms of biological role, tubulin is the major constituent of microtubules, a cylinder consisting of laterally associated linear protofilaments composed of alpha- and beta-tubulin heterodimers. Microtubules grow by the addition of GTP-tubulin dimers to the microtubule end, where a stabilizing cap forms. Below the cap, tubulin dimers are in GDP-bound state, owing to GTPase activity of alpha-tubulin. The protein is Tubulin beta chain of Toxoplasma gondii.